The sequence spans 146 residues: MIF-like protein mif-3 (146 aa).

It belongs to the MIF family.

In Caenorhabditis elegans, this protein is MIF-like protein mif-3 (mif-3).